Consider the following 96-residue polypeptide: Protein RnfH (96 aa).

This sequence belongs to the UPF0125 (RnfH) family.

The chain is Protein RnfH from Escherichia coli O81 (strain ED1a).